The sequence spans 160 residues: Endoribonuclease YbeY (160 aa).

Residues His-125, His-129, and His-135 each coordinate Zn(2+).

Belongs to the endoribonuclease YbeY family. Requires Zn(2+) as cofactor.

It is found in the cytoplasm. In terms of biological role, single strand-specific metallo-endoribonuclease involved in late-stage 70S ribosome quality control and in maturation of the 3' terminus of the 16S rRNA. The sequence is that of Endoribonuclease YbeY from Dehalococcoides mccartyi (strain ATCC BAA-2100 / JCM 16839 / KCTC 5957 / BAV1).